Consider the following 457-residue polypeptide: MKQETAQNKKVHFISLGCPKNLVDSEIMAGTLMKDGYEVVGEADQADTVIVNTCGFIEDSKKESIQRILDMSDLKQEGKIKKVVVAGCLTQRYKDDLVEGLPEADLFVGSGEFQNIAKILKNSDEGEKQKTFFNLPTYLQEEATPRVNSQPGHRAYLKISEGCMKRCAFCAIPLIRGNLQSRSIDAIVAEAKLLVAGGVKELIIISHDFTDYGFDIRRKDPTRKESPVELLKALDQVEGLQWIRLMYLYPDGITQEMVQVIKNSTKIVKYFDMPLQHVNDQVLKSMNRKMTRDEIETALMNIREHLPEAVIRTQFIVGFPGETQEQFEELLNFVAEQQFDRVGCFKYSPEENTPGGRMENQIDEETKQYRHDALMEVQQNISREKHSDFVGKTLQVIVEGFSEETDLLLQGRFWGQAPDIDGVVLINDGQAQVGDMVKVHITDNMEYDLIGEIVVEN.

The 120-residue stretch at 9 to 128 (KKVHFISLGC…ILKNSDEGEK (120 aa)) folds into the MTTase N-terminal domain. [4Fe-4S] cluster is bound by residues C18, C54, C88, C163, C167, and C170. Residues 149–384 (SQPGHRAYLK…MEVQQNISRE (236 aa)) enclose the Radical SAM core domain. Residues 387 to 455 (SDFVGKTLQV…EYDLIGEIVV (69 aa)) enclose the TRAM domain.

The protein belongs to the methylthiotransferase family. RimO subfamily. [4Fe-4S] cluster is required as a cofactor.

The protein resides in the cytoplasm. It carries out the reaction L-aspartate(89)-[ribosomal protein uS12]-hydrogen + (sulfur carrier)-SH + AH2 + 2 S-adenosyl-L-methionine = 3-methylsulfanyl-L-aspartate(89)-[ribosomal protein uS12]-hydrogen + (sulfur carrier)-H + 5'-deoxyadenosine + L-methionine + A + S-adenosyl-L-homocysteine + 2 H(+). Catalyzes the methylthiolation of an aspartic acid residue of ribosomal protein uS12. This chain is Ribosomal protein uS12 methylthiotransferase RimO, found in Bdellovibrio bacteriovorus (strain ATCC 15356 / DSM 50701 / NCIMB 9529 / HD100).